The chain runs to 204 residues: Large ribosomal subunit protein uL4 (204 aa).

The tract at residues 48–75 is disordered; that stretch reads HTKGRSDVSGGGKKPWRQKGRGGARAGS.

It belongs to the universal ribosomal protein uL4 family. In terms of assembly, part of the 50S ribosomal subunit.

In terms of biological role, one of the primary rRNA binding proteins, this protein initially binds near the 5'-end of the 23S rRNA. It is important during the early stages of 50S assembly. It makes multiple contacts with different domains of the 23S rRNA in the assembled 50S subunit and ribosome. Forms part of the polypeptide exit tunnel. The protein is Large ribosomal subunit protein uL4 of Campylobacter fetus subsp. fetus (strain 82-40).